We begin with the raw amino-acid sequence, 114 residues long: Chaperone protein YscY (114 aa).

Binds to YscX.

It is found in the cytoplasm. Functionally, required for Yop secretion. Functions probably as a chaperone which stabilizes YscX within the cell, before its secretion. This is Chaperone protein YscY (yscY) from Yersinia enterocolitica.